We begin with the raw amino-acid sequence, 73 residues long: U-scoloptoxin(03)-Ssd1b (73 aa).

The N-terminal stretch at 1–23 is a signal peptide; sequence MKSSMAVLLVMGLIIFTLDKCYS.

In terms of processing, contains 3 disulfide bonds. In terms of tissue distribution, expressed by the venom gland.

It localises to the secreted. In Scolopendra dehaani (Thai centipede), this protein is U-scoloptoxin(03)-Ssd1b.